Reading from the N-terminus, the 425-residue chain is Imidazolonepropionase (425 aa).

Fe(3+)-binding residues include histidine 82 and histidine 84. Positions 82 and 84 each coordinate Zn(2+). Residues arginine 91, tyrosine 154, and histidine 187 each contribute to the 4-imidazolone-5-propanoate site. Tyrosine 154 lines the N-formimidoyl-L-glutamate pocket. Residue histidine 253 participates in Fe(3+) binding. Histidine 253 serves as a coordination point for Zn(2+). Glutamate 256 contacts 4-imidazolone-5-propanoate. Aspartate 328 contributes to the Fe(3+) binding site. Aspartate 328 serves as a coordination point for Zn(2+). N-formimidoyl-L-glutamate-binding residues include asparagine 330 and glycine 332. Residue serine 333 participates in 4-imidazolone-5-propanoate binding.

The protein belongs to the metallo-dependent hydrolases superfamily. HutI family. It depends on Zn(2+) as a cofactor. Requires Fe(3+) as cofactor.

It is found in the cytoplasm. The enzyme catalyses 4-imidazolone-5-propanoate + H2O = N-formimidoyl-L-glutamate. The protein operates within amino-acid degradation; L-histidine degradation into L-glutamate; N-formimidoyl-L-glutamate from L-histidine: step 3/3. Catalyzes the hydrolytic cleavage of the carbon-nitrogen bond in imidazolone-5-propanoate to yield N-formimidoyl-L-glutamate. It is the third step in the universal histidine degradation pathway. The chain is Imidazolonepropionase from Symbiobacterium thermophilum (strain DSM 24528 / JCM 14929 / IAM 14863 / T).